We begin with the raw amino-acid sequence, 440 residues long: UDP-N-acetylmuramoylalanine--D-glutamate ligase (440 aa).

112–118 contributes to the ATP binding site; that stretch reads GSNGKST.

This sequence belongs to the MurCDEF family.

It localises to the cytoplasm. It catalyses the reaction UDP-N-acetyl-alpha-D-muramoyl-L-alanine + D-glutamate + ATP = UDP-N-acetyl-alpha-D-muramoyl-L-alanyl-D-glutamate + ADP + phosphate + H(+). Its pathway is cell wall biogenesis; peptidoglycan biosynthesis. In terms of biological role, cell wall formation. Catalyzes the addition of glutamate to the nucleotide precursor UDP-N-acetylmuramoyl-L-alanine (UMA). In Blochmanniella pennsylvanica (strain BPEN), this protein is UDP-N-acetylmuramoylalanine--D-glutamate ligase.